Reading from the N-terminus, the 377-residue chain is Chaperone protein DnaJ (377 aa).

The J domain maps to Asp-5 to Gly-70. The CR-type zinc finger occupies Gly-138 to Glu-216. Cys-151, Cys-154, Cys-168, Cys-171, Cys-190, Cys-193, Cys-204, and Cys-207 together coordinate Zn(2+). CXXCXGXG motif repeat units follow at residues Cys-151–Gly-158, Cys-168–Gly-175, Cys-190–Gly-197, and Cys-204–Gly-211.

This sequence belongs to the DnaJ family. As to quaternary structure, homodimer. Zn(2+) is required as a cofactor.

The protein resides in the cytoplasm. Its function is as follows. Participates actively in the response to hyperosmotic and heat shock by preventing the aggregation of stress-denatured proteins and by disaggregating proteins, also in an autonomous, DnaK-independent fashion. Unfolded proteins bind initially to DnaJ; upon interaction with the DnaJ-bound protein, DnaK hydrolyzes its bound ATP, resulting in the formation of a stable complex. GrpE releases ADP from DnaK; ATP binding to DnaK triggers the release of the substrate protein, thus completing the reaction cycle. Several rounds of ATP-dependent interactions between DnaJ, DnaK and GrpE are required for fully efficient folding. Also involved, together with DnaK and GrpE, in the DNA replication of plasmids through activation of initiation proteins. The polypeptide is Chaperone protein DnaJ (Agrobacterium fabrum (strain C58 / ATCC 33970) (Agrobacterium tumefaciens (strain C58))).